Here is a 323-residue protein sequence, read N- to C-terminus: Dihydrodiol dehydrogenase 3 (323 aa).

NADP(+) is bound by residues 20 to 24 and Asp-50; that span reads GFGTF. Tyr-55 acts as the Proton donor in catalysis. Residue His-117 participates in substrate binding. Residues 166–167, Gln-190, 216–221, and 270–280 each bind NADP(+); these read SN, YGALGS, and KSYNKKRIKEN.

This sequence belongs to the aldo/keto reductase family.

It localises to the cytoplasm. This Bos taurus (Bovine) protein is Dihydrodiol dehydrogenase 3.